A 201-amino-acid polypeptide reads, in one-letter code: Protocatechuate 3,4-dioxygenase alpha chain (201 aa).

A 3,4-dihydroxybenzoate-binding site is contributed by Arg-134.

It belongs to the intradiol ring-cleavage dioxygenase family. The enzyme is an oligomer of 12 copies of the alpha and beta chains. It depends on Fe(3+) as a cofactor.

It catalyses the reaction 3,4-dihydroxybenzoate + O2 = 3-carboxy-cis,cis-muconate + 2 H(+). It participates in aromatic compound metabolism; beta-ketoadipate pathway; 3-carboxy-cis,cis-muconate from 3,4-dihydroxybenzoate: step 1/1. Plays an essential role in the utilization of numerous aromatic and hydroaromatic compounds via the beta-ketoadipate pathway. The chain is Protocatechuate 3,4-dioxygenase alpha chain (pcaG) from Pseudomonas putida (Arthrobacter siderocapsulatus).